Here is a 434-residue protein sequence, read N- to C-terminus: Glutamate-1-semialdehyde 2,1-aminomutase 2 (434 aa).

K269 bears the N6-(pyridoxal phosphate)lysine mark.

Belongs to the class-III pyridoxal-phosphate-dependent aminotransferase family. HemL subfamily. As to quaternary structure, homodimer. It depends on pyridoxal 5'-phosphate as a cofactor.

The protein resides in the cytoplasm. It catalyses the reaction (S)-4-amino-5-oxopentanoate = 5-aminolevulinate. It functions in the pathway porphyrin-containing compound metabolism; protoporphyrin-IX biosynthesis; 5-aminolevulinate from L-glutamyl-tRNA(Glu): step 2/2. This is Glutamate-1-semialdehyde 2,1-aminomutase 2 from Exiguobacterium sp. (strain ATCC BAA-1283 / AT1b).